A 437-amino-acid chain; its full sequence is Type II methylase M.HgiEI (437 aa).

An SAM-dependent MTase C5-type domain is found at 4-431 (FRFIDLFAGI…KRLQCVKLFE (428 aa)). Cysteine 75 is a catalytic residue.

It belongs to the class I-like SAM-binding methyltransferase superfamily. C5-methyltransferase family.

It carries out the reaction a 2'-deoxycytidine in DNA + S-adenosyl-L-methionine = a 5-methyl-2'-deoxycytidine in DNA + S-adenosyl-L-homocysteine + H(+). Functionally, a methylase that recognizes the double-stranded sequence 5'-GGWCC-3', methylates C-? on both strands, and protects the DNA from cleavage by the HgiEI endonuclease. This system is more active than isoschizomeric RM.HgiBI. The sequence is that of Type II methylase M.HgiEI from Herpetosiphon aurantiacus (Herpetosiphon giganteus).